The sequence spans 389 residues: Endo-chitosanase C (389 aa).

A signal peptide spans 1–22 (MPIKSFASRLALSLAICGTAMG). The stretch at 280–313 (CSWPGHCAGFKNKGATCSSNDDCSDDLACQNGKC) is one R3-1 repeat. An R3-2 repeat occupies 320-350 (ETCSWEGHCKGATCSSNDDCSDELACISGIC). The R3-3 repeat unit spans residues 357–387 (ETCEWEGHCEGASCSSHDDCDGNLACKNGKC).

It belongs to the glycosyl hydrolase 75 family.

The protein localises to the secreted. It catalyses the reaction Endohydrolysis of beta-(1-&gt;4)-linkages between D-glucosamine residues in a partly acetylated chitosan.. Its function is as follows. Chitosanase catalyzing the endo-type cleavage of chitosan, the deacylated form of chitin. Chitosanase may be crucial in the degradation of the deacetylated portion of chitin in the fungal cell wall. Chitoolisaccharides produced by the hydrolysis of partially N-acetylated chitosan are known to have many biological activities, including antibacterial activity, immune-enhancing effects, and elicitor activity. This chain is Endo-chitosanase C (csnC), found in Aspergillus oryzae (strain ATCC 42149 / RIB 40) (Yellow koji mold).